A 445-amino-acid chain; its full sequence is Cholesterol side-chain cleavage enzyme, mitochondrial (445 aa).

Residues 1–36 constitute a mitochondrion transit peptide; the sequence is RGLPSRSVFLRGCQASLSTAQERLGHPGVPTREGVR.

Belongs to the cytochrome P450 family. As to quaternary structure, interacts with FDX1/adrenodoxin. Heme is required as a cofactor.

It localises to the mitochondrion inner membrane. The catalysed reaction is 6 reduced [adrenodoxin] + cholesterol + 3 O2 + 6 H(+) = 4-methylpentanal + pregnenolone + 6 oxidized [adrenodoxin] + 4 H2O. It carries out the reaction 2 reduced [adrenodoxin] + cholesterol + O2 + 2 H(+) = (22R)-hydroxycholesterol + 2 oxidized [adrenodoxin] + H2O. It catalyses the reaction (22R)-hydroxycholesterol + 2 reduced [adrenodoxin] + O2 + 2 H(+) = (20R,22R)-20,22-dihydroxycholesterol + 2 oxidized [adrenodoxin] + H2O. The enzyme catalyses (20R,22R)-20,22-dihydroxycholesterol + 2 reduced [adrenodoxin] + O2 + 2 H(+) = 4-methylpentanal + pregnenolone + 2 oxidized [adrenodoxin] + 2 H2O. Its pathway is lipid metabolism; C21-steroid hormone metabolism. The protein operates within steroid metabolism; cholesterol metabolism. Functionally, a cytochrome P450 monooxygenase that catalyzes the side-chain hydroxylation and cleavage of cholesterol to pregnenolone, the precursor of most steroid hormones. Catalyzes three sequential oxidation reactions of cholesterol, namely the hydroxylation at C22 followed with the hydroxylation at C20 to yield 20R,22R-hydroxycholesterol that is further cleaved between C20 and C22 to yield the C21-steroid pregnenolone and 4-methylpentanal. Mechanistically, uses molecular oxygen inserting one oxygen atom into a substrate and reducing the second into a water molecule. Two electrons are provided by NADPH via a two-protein mitochondrial transfer system comprising flavoprotein FDXR (adrenodoxin/ferredoxin reductase) and nonheme iron-sulfur protein FDX1 or FDX2 (adrenodoxin/ferredoxin). This is Cholesterol side-chain cleavage enzyme, mitochondrial (CYP11A1) from Oryctolagus cuniculus (Rabbit).